A 1383-amino-acid polypeptide reads, in one-letter code: Spike glycoprotein (1383 aa).

Residues 1–25 form the signal peptide; that stretch reads MRSLIYFWLLLPVLPTLSLPQDVTR. The tract at residues 26-734 is S1; the sequence is CQSTTNFRRF…TRELPGFFYH (709 aa). Residues 26–1324 lie on the Virion surface side of the membrane; the sequence is CQSTTNFRRF…NRVETYIKWP (1299 aa). The interval 617–745 is interaction with host ANPEP; the sequence is FQFTKGELIT…NDGSNCTEPV (129 aa). The segment at 735-1383 is S2; sequence SNDGSNCTEP…YEAFEKVHVQ (649 aa). The fusion peptide stretch occupies residues 955 to 975; sequence IGGMALGGITAAAALPFSYAV. The interval 969–1088 is heptad repeat 1 (HR1); that stretch reads LPFSYAVQAR…QVDRLITGRL (120 aa). 2 coiled-coil regions span residues 1036-1080 and 1272-1314; these read QEVV…DVQV and TYLN…LEWL. The segment at 1240 to 1336 is heptad repeat 2 (HR2); that stretch reads PDYIDVNKTL…VWLIIVIVLI (97 aa). A helical transmembrane segment spans residues 1325 to 1344; sequence WWVWLIIVIVLIFVVSLLVF. Residues 1345 to 1383 are Intravirion-facing; sequence CCISTGCCGCCGCCGACFSGCCRGPRLQPYEAFEKVHVQ. The short motif at 1379 to 1383 is the KxHxx element; the sequence is KVHVQ.

The protein belongs to the alphacoronaviruses spike protein family. As to quaternary structure, homotrimer. During virus morphogenesis, found in a complex with M and HE proteins. Interacts with host ANPEP.

It localises to the virion membrane. It is found in the host endoplasmic reticulum-Golgi intermediate compartment membrane. In terms of biological role, S1 region attaches the virion to the cell membrane by interacting with host ANPEP/aminopeptidase N, initiating the infection. Binding to the receptor probably induces conformational changes in the S glycoprotein unmasking the fusion peptide of S2 region and activating membranes fusion. S2 region belongs to the class I viral fusion protein. Under the current model, the protein has at least 3 conformational states: pre-fusion native state, pre-hairpin intermediate state, and post-fusion hairpin state. During viral and target cell membrane fusion, the coiled coil regions (heptad repeats) regions assume a trimer-of-hairpins structure, positioning the fusion peptide in close proximity to the C-terminal region of the ectodomain. The formation of this structure appears to drive apposition and subsequent fusion of viral and target cell membranes. The protein is Spike glycoprotein of Porcine epidemic diarrhea virus (strain CV777) (PEDV).